A 388-amino-acid chain; its full sequence is Succinate--CoA ligase [ADP-forming] subunit beta (388 aa).

The ATP-grasp domain occupies 9–244 (KEILRKYNVP…LDEEDANEIE (236 aa)). ATP contacts are provided by residues K46, 53–55 (GRG), E99, A102, and E107. 2 residues coordinate Mg(2+): N199 and D213. Residues N264 and 321-323 (GIM) each bind substrate.

The protein belongs to the succinate/malate CoA ligase beta subunit family. Heterotetramer of two alpha and two beta subunits. It depends on Mg(2+) as a cofactor.

It catalyses the reaction succinate + ATP + CoA = succinyl-CoA + ADP + phosphate. It carries out the reaction GTP + succinate + CoA = succinyl-CoA + GDP + phosphate. The protein operates within carbohydrate metabolism; tricarboxylic acid cycle; succinate from succinyl-CoA (ligase route): step 1/1. Its function is as follows. Succinyl-CoA synthetase functions in the citric acid cycle (TCA), coupling the hydrolysis of succinyl-CoA to the synthesis of either ATP or GTP and thus represents the only step of substrate-level phosphorylation in the TCA. The beta subunit provides nucleotide specificity of the enzyme and binds the substrate succinate, while the binding sites for coenzyme A and phosphate are found in the alpha subunit. The chain is Succinate--CoA ligase [ADP-forming] subunit beta from Cupriavidus necator (strain ATCC 17699 / DSM 428 / KCTC 22496 / NCIMB 10442 / H16 / Stanier 337) (Ralstonia eutropha).